Consider the following 478-residue polypeptide: Bifunctional protein HldE (478 aa).

The tract at residues 1–318 (MKVTLPDFRQ…ENAIRGRADT (318 aa)) is ribokinase. 195 to 198 (NLSE) lines the ATP pocket. Residue D264 is part of the active site. A cytidylyltransferase region spans residues 344 to 478 (MTNGCFDILH…NTIKANASKS (135 aa)).

In the N-terminal section; belongs to the carbohydrate kinase PfkB family. It in the C-terminal section; belongs to the cytidylyltransferase family. Homodimer.

The catalysed reaction is D-glycero-beta-D-manno-heptose 7-phosphate + ATP = D-glycero-beta-D-manno-heptose 1,7-bisphosphate + ADP + H(+). The enzyme catalyses D-glycero-beta-D-manno-heptose 1-phosphate + ATP + H(+) = ADP-D-glycero-beta-D-manno-heptose + diphosphate. It participates in nucleotide-sugar biosynthesis; ADP-L-glycero-beta-D-manno-heptose biosynthesis; ADP-L-glycero-beta-D-manno-heptose from D-glycero-beta-D-manno-heptose 7-phosphate: step 1/4. The protein operates within nucleotide-sugar biosynthesis; ADP-L-glycero-beta-D-manno-heptose biosynthesis; ADP-L-glycero-beta-D-manno-heptose from D-glycero-beta-D-manno-heptose 7-phosphate: step 3/4. Its function is as follows. Catalyzes the phosphorylation of D-glycero-D-manno-heptose 7-phosphate at the C-1 position to selectively form D-glycero-beta-D-manno-heptose-1,7-bisphosphate. Functionally, catalyzes the ADP transfer from ATP to D-glycero-beta-D-manno-heptose 1-phosphate, yielding ADP-D-glycero-beta-D-manno-heptose. This is Bifunctional protein HldE from Pectobacterium carotovorum subsp. carotovorum (strain PC1).